Reading from the N-terminus, the 456-residue chain is Kynurenine 3-monooxygenase (456 aa).

This sequence belongs to the aromatic-ring hydroxylase family. KMO subfamily. The cofactor is FAD.

It catalyses the reaction L-kynurenine + NADPH + O2 + H(+) = 3-hydroxy-L-kynurenine + NADP(+) + H2O. It functions in the pathway cofactor biosynthesis; NAD(+) biosynthesis; quinolinate from L-kynurenine: step 1/3. In terms of biological role, catalyzes the hydroxylation of L-kynurenine (L-Kyn) to form 3-hydroxy-L-kynurenine (L-3OHKyn). Required for synthesis of quinolinic acid. In Xanthomonas campestris pv. campestris (strain 8004), this protein is Kynurenine 3-monooxygenase.